Reading from the N-terminus, the 902-residue chain is AAA+ ATPase ClpV1 (902 aa).

The Clp R domain occupies 10–151 (FGKLNSLAYK…KVEALTERFD (142 aa)). Repeat stretches follow at residues 13-78 (LNSL…LDRL) and 88-151 (LSSH…ERFD). 237-244 (GEAGVGKT) is a binding site for ATP. Residues 441–559 (AEVDDSRRRI…AQLSALQGEE (119 aa)) are a coiled coil. 640-647 (GTSGVGKT) contacts ATP.

The protein belongs to the ClpA/ClpB family. As to quaternary structure, interacts with TagJ.

It localises to the cytoplasm. Its function is as follows. Component of the H1 type VI (H1-T6SS) secretion system that plays a role in the release of toxins targeting both eukaryotic and prokaryotic species. Acts as an AAA(+) ATPase that disassembles the contracted sheath, which resets the systems for reassembly of an extended sheath that is ready to fire again. This is AAA+ ATPase ClpV1 (clpV1) from Pseudomonas aeruginosa (strain ATCC 15692 / DSM 22644 / CIP 104116 / JCM 14847 / LMG 12228 / 1C / PRS 101 / PAO1).